The following is a 207-amino-acid chain: Peptidyl-tRNA hydrolase (207 aa).

Tyrosine 17 serves as a coordination point for tRNA. Histidine 22 (proton acceptor) is an active-site residue. Residues phenylalanine 68, asparagine 70, and asparagine 116 each contribute to the tRNA site.

The protein belongs to the PTH family. In terms of assembly, monomer.

The protein resides in the cytoplasm. The catalysed reaction is an N-acyl-L-alpha-aminoacyl-tRNA + H2O = an N-acyl-L-amino acid + a tRNA + H(+). In terms of biological role, hydrolyzes ribosome-free peptidyl-tRNAs (with 1 or more amino acids incorporated), which drop off the ribosome during protein synthesis, or as a result of ribosome stalling. Its function is as follows. Catalyzes the release of premature peptidyl moieties from peptidyl-tRNA molecules trapped in stalled 50S ribosomal subunits, and thus maintains levels of free tRNAs and 50S ribosomes. This is Peptidyl-tRNA hydrolase from Buchnera aphidicola subsp. Baizongia pistaciae (strain Bp).